The chain runs to 315 residues: Probable carboxylesterase 3 (315 aa).

Met1 is modified (N-acetylmethionine). The Involved in the stabilization of the negatively charged intermediate by the formation of the oxyanion hole signature appears at 81–83 (HGG). Active-site residues include Ser160, Asp258, and His290.

Belongs to the 'GDXG' lipolytic enzyme family. In terms of tissue distribution, expressed in flowers and siliques.

The catalysed reaction is a carboxylic ester + H2O = an alcohol + a carboxylate + H(+). In terms of biological role, carboxylesterase acting on esters with varying acyl chain length. This is Probable carboxylesterase 3 (CXE3) from Arabidopsis thaliana (Mouse-ear cress).